Reading from the N-terminus, the 274-residue chain is Exosome complex component Rrp42 (274 aa).

It belongs to the RNase PH family. Rrp42 subfamily. As to quaternary structure, component of the archaeal exosome complex. Forms a hexameric ring-like arrangement composed of 3 Rrp41-Rrp42 heterodimers. The hexameric ring associates with a trimer of Rrp4 and/or Csl4 subunits.

The protein resides in the cytoplasm. In terms of biological role, non-catalytic component of the exosome, which is a complex involved in RNA degradation. Contributes to the structuring of the Rrp41 active site. This Pyrococcus abyssi (strain GE5 / Orsay) protein is Exosome complex component Rrp42.